We begin with the raw amino-acid sequence, 337 residues long: Transcription factor HBI1 (337 aa).

The interval 119-180 (VALKNKRKPE…SKGASENQKL (62 aa)) is disordered. The span at 126–151 (KPEVKTREEQKTEKKIKVEAETESSM) shows a compositional bias: basic and acidic residues. Positions 152 to 165 (KGKSNMGNTEASSD) are enriched in polar residues. In terms of domain architecture, bHLH spans 191 to 241 (QATDRHSLAERARREKISKKMKYLQDIVPGCNKVTGKAGMLDEIINYVQCL).

As to quaternary structure, homodimer. Interacts with IBH1. As to expression, highly expressed in hypocotyls and cotyledons. Expressed in leaves, stems, and flowers.

Its subcellular location is the nucleus. Its function is as follows. Atypical bHLH transcription factor that acts as a positive regulator of cell elongation downstream of multiple external and endogenous signals by direct binding to the promoters and activation of the two expansin genes EXPA1 and EXPA8, encoding cell wall loosening enzymes. Transcriptional activity is inhibited when binding to the bHLH transcription factor IBH1. The chain is Transcription factor HBI1 (HBI1) from Arabidopsis thaliana (Mouse-ear cress).